Consider the following 177-residue polypeptide: Macro domain-containing protein in non 5'region (177 aa).

The Macro domain occupies 1 to 177 (MSTSVSPVVR…VEFEEVLAMR (177 aa)).

The protein belongs to the MacroD-type family.

The sequence is that of Macro domain-containing protein in non 5'region from Streptomyces griseus.